The following is a 307-amino-acid chain: MTETTKTHVILLACGSFNPITKGHIQMFERARDYLHKTGRFIVIGGIVSPVHDSYGKQGLVSSRHRLIMCQLAVQNSDWIRVDPWECYQDTWQTTCSVLEHHRDLMKRVTGCILSNVNTPSMTPVIGQPRNETSQPIYQNNNAPSKPTAAKILGKVGESLSRICCVRPPVERFTFVDENANLGTVMRYEEIELRILLLCGSDLLESFCIPGLWNEADMEVIVGDFGIVVVPRDAADTDRIMNHSSILRKYKNNIMVVKDDINHPMSVVSSTKSRLALQHGDGHVVDYLSQPVIDYILKSQLYINASG.

Residues Ser16 and Phe17 each coordinate NAD(+). Position 24 (His24) interacts with ATP. Trp92 and Thr95 together coordinate NAD(+). Residues Cys164 and Cys165 are each lipidated (S-palmitoyl cysteine). NAD(+)-binding residues include Gly200, Asp202, Leu212, Trp213, and Arg232. 271 to 274 is an ATP binding site; it reads TKSR.

The protein belongs to the eukaryotic NMN adenylyltransferase family. Monomer. Mg(2+) is required as a cofactor. Post-translationally, degraded in response to injured neurite. Degradation is caused by polyubiquitination by MYCBP2 after recognition by FBXO45. In terms of processing, palmitoylated; palmitoylation is required for membrane association.

The protein resides in the golgi apparatus membrane. It localises to the cytoplasmic vesicle membrane. It is found in the cytoplasm. Its subcellular location is the cell projection. The protein localises to the axon. It catalyses the reaction beta-nicotinamide D-ribonucleotide + ATP + H(+) = diphosphate + NAD(+). The enzyme catalyses nicotinate beta-D-ribonucleotide + ATP + H(+) = deamido-NAD(+) + diphosphate. It functions in the pathway cofactor biosynthesis; NAD(+) biosynthesis; NAD(+) from nicotinamide D-ribonucleotide: step 1/1. Its pathway is cofactor biosynthesis; NAD(+) biosynthesis; deamido-NAD(+) from nicotinate D-ribonucleotide: step 1/1. With respect to regulation, inhibited by P1-(adenosine-5')-P3-(nicotinamide-riboside-5')-triphosphate (Np3AD) and P1-(adenosine-5')-P4-(nicotinamide-riboside-5')-tetraphosphate (Np4AD). In terms of biological role, nicotinamide/nicotinate-nucleotide adenylyltransferase that acts as an axon maintenance factor. Axon survival factor required for the maintenance of healthy axons: acts by delaying Wallerian axon degeneration, an evolutionarily conserved process that drives the loss of damaged axons. Catalyzes the formation of NAD(+) from nicotinamide mononucleotide (NMN) and ATP. Can also use the deamidated form; nicotinic acid mononucleotide (NaMN) as substrate but with a lower efficiency. Cannot use triazofurin monophosphate (TrMP) as substrate. Also catalyzes the reverse reaction, i.e. the pyrophosphorolytic cleavage of NAD(+). For the pyrophosphorolytic activity prefers NAD(+), NADH and NaAD as substrates and degrades nicotinic acid adenine dinucleotide phosphate (NHD) less effectively. Fails to cleave phosphorylated dinucleotides NADP(+), NADPH and NaADP(+). Also acts as an activator of ADP-ribosylation by supporting the catalytic activity of PARP16 and promoting mono-ADP-ribosylation of ribosomes by PARP16. May be involved in the maintenance of axonal integrity. This Bos taurus (Bovine) protein is Nicotinamide/nicotinic acid mononucleotide adenylyltransferase 2 (NMNAT2).